Reading from the N-terminus, the 162-residue chain is MESKILRVGMADAKVTKSPGILTTIGLGSCVGIVLYDPIAKVAGLVHIMLPYSNKISDNSNKLKFADTGIEILIEEMLKEGANPKRLISKLAGGAQMFSSKINSDIMNIGERNVIATKEVLKKLGIPIVAEDTGGNYGRTIEFYSEDGRLLVKTIGHGVKYI.

This sequence belongs to the CheD family.

It carries out the reaction L-glutaminyl-[protein] + H2O = L-glutamyl-[protein] + NH4(+). Probably deamidates glutamine residues to glutamate on methyl-accepting chemotaxis receptors (MCPs), playing an important role in chemotaxis. In Caldanaerobacter subterraneus subsp. tengcongensis (strain DSM 15242 / JCM 11007 / NBRC 100824 / MB4) (Thermoanaerobacter tengcongensis), this protein is Probable chemoreceptor glutamine deamidase CheD.